The primary structure comprises 121 residues: Phospholipase A2 homolog EPL_00195 (121 aa).

Disulfide bonds link Cys-25-Cys-114, Cys-27-Cys-43, Cys-42-Cys-94, Cys-48-Cys-121, Cys-49-Cys-87, Cys-56-Cys-80, and Cys-74-Cys-85. Residues 104 to 116 (KKYRIYPNFLCRG) are important for membrane-damaging activities in eukaryotes and bacteria; heparin-binding.

The protein belongs to the phospholipase A2 family. Group II subfamily. S49 sub-subfamily. In terms of assembly, monomer. Expressed by the venom gland.

It localises to the secreted. Snake venom phospholipase A2 homolog that lacks enzymatic activity. Shows high myotoxin activities and displays edema-inducing activities. Has cytotoxic activities against HUVEC cells (LC(50)=2.5 uL) and human lung adenocarcinoma A549 cells (LC(50)=2.9 uL). The sequence is that of Phospholipase A2 homolog EPL_00195 from Echis pyramidum leakeyi (Leakey's carpet viper).